A 366-amino-acid polypeptide reads, in one-letter code: Fructose-bisphosphate aldolase 2 (366 aa).

The substrate site is built by R60 and K150. E191 acts as the Proton acceptor in catalysis. The Schiff-base intermediate with dihydroxyacetone-P role is filled by K233.

This sequence belongs to the class I fructose-bisphosphate aldolase family.

It catalyses the reaction beta-D-fructose 1,6-bisphosphate = D-glyceraldehyde 3-phosphate + dihydroxyacetone phosphate. The protein operates within carbohydrate degradation; glycolysis; D-glyceraldehyde 3-phosphate and glycerone phosphate from D-glucose: step 4/4. The protein is Fructose-bisphosphate aldolase 2 (aldo-2) of Caenorhabditis elegans.